A 525-amino-acid chain; its full sequence is Protein disulfide-isomerase A2 (525 aa).

The first 21 residues, Met-1–Gly-21, serve as a signal peptide directing secretion. Residues Arg-27 to Gly-152 enclose the Thioredoxin 1 domain. Residues Cys-71 and Cys-74 each act as nucleophile in the active site. Cysteines 71 and 74 form a disulfide. 2 N-linked (GlcNAc...) asparagine glycosylation sites follow: Asn-127 and Asn-284. Positions Val-367–Val-496 constitute a Thioredoxin 2 domain. Catalysis depends on nucleophile residues Cys-418 and Cys-421. A disulfide bond links Cys-418 and Cys-421. Residues Asp-492–Leu-525 are disordered. Positions Glu-505–Pro-514 are enriched in pro residues. N-linked (GlcNAc...) asparagine glycosylation occurs at Asn-516. Residues Asn-516–Leu-525 are compositionally biased toward polar residues. The Prevents secretion from ER signature appears at Lys-522–Leu-525.

This sequence belongs to the protein disulfide isomerase family. Monomer; predominantly as monomer under reducing conditions. Homodimer; disulfide-linked. Part of a large chaperone multiprotein complex comprising DNAJB11, HSP90B1, HSPA5, HYOU, PDIA2, PDIA4, PDIA6, PPIB, SDF2L1, UGGT1 and very small amounts of ERP29, but not, or at very low levels, CALR nor CANX. In terms of processing, the disulfide-linked homodimer exhibits an enhanced chaperone activity. Post-translationally, glycosylated. Highly expressed in pancreas (at protein level).

The protein localises to the endoplasmic reticulum lumen. It catalyses the reaction Catalyzes the rearrangement of -S-S- bonds in proteins.. Its function is as follows. Acts as an intracellular estrogen-binding protein. May be involved in modulating cellular levels and biological functions of estrogens in the pancreas. May act as a chaperone that inhibits aggregation of misfolded proteins. This chain is Protein disulfide-isomerase A2 (PDIA2), found in Homo sapiens (Human).